We begin with the raw amino-acid sequence, 147 residues long: MVHFTAEEKAAITSLWGKMNVEEAGGEALGRLLVVYPWTQRFFDNFGNLSSPSAILGNPKVKAHGKKVLTSFEDAIKNMDNLKTTFAKLSELHCDKLHVDPENFRLLGNVMVIILATHFGKEFTPEVQAAWQKLVSAVAIALGHKYH.

The region spanning 3 to 147 (HFTAEEKAAI…VAIALGHKYH (145 aa)) is the Globin domain. Residues Ser14 and Ser51 each carry the phosphoserine modification. Heme b-binding residues include His64 and His93.

The protein belongs to the globin family. As to quaternary structure, heterotetramer of two alpha chains and two epsilon chains in early embryonic hemoglobin Gower-2; two zeta chains and two epsilon chains in early embryonic hemoglobin Gower-1. In terms of tissue distribution, red blood cells.

Functionally, the epsilon chain is a beta-type chain of early mammalian embryonic hemoglobin. This Lagothrix lagotricha (Brown woolly monkey) protein is Hemoglobin subunit epsilon (HBE1).